Here is a 485-residue protein sequence, read N- to C-terminus: Ribulose bisphosphate carboxylase large chain (485 aa).

Positions 124 and 174 each coordinate substrate. Lys-176 (proton acceptor) is an active-site residue. Substrate is bound at residue Lys-178. Lys-202, Asp-204, and Glu-205 together coordinate Mg(2+). Lys-202 bears the N6-carboxylysine mark. His-294 serves as the catalytic Proton acceptor. Arg-295, His-327, and Ser-379 together coordinate substrate.

It belongs to the RuBisCO large chain family. Type I subfamily. As to quaternary structure, heterohexadecamer of 8 large chains and 8 small chains. Mg(2+) serves as cofactor.

It catalyses the reaction 2 (2R)-3-phosphoglycerate + 2 H(+) = D-ribulose 1,5-bisphosphate + CO2 + H2O. It carries out the reaction D-ribulose 1,5-bisphosphate + O2 = 2-phosphoglycolate + (2R)-3-phosphoglycerate + 2 H(+). RuBisCO catalyzes two reactions: the carboxylation of D-ribulose 1,5-bisphosphate, the primary event in carbon dioxide fixation, as well as the oxidative fragmentation of the pentose substrate. Both reactions occur simultaneously and in competition at the same active site. This chain is Ribulose bisphosphate carboxylase large chain, found in Rhodopseudomonas palustris (strain ATCC BAA-98 / CGA009).